The chain runs to 666 residues: tRNA 5-methylaminomethyl-2-thiouridine biosynthesis bifunctional protein MnmC (666 aa).

A tRNA (mnm(5)s(2)U34)-methyltransferase region spans residues 1–245 (MKQYAIQPAT…KREMLCGVME (245 aa)). The FAD-dependent cmnm(5)s(2)U34 oxidoreductase stretch occupies residues 270 to 666 (IGGGIASALL…RKLLKGKAVK (397 aa)).

It in the N-terminal section; belongs to the methyltransferase superfamily. tRNA (mnm(5)s(2)U34)-methyltransferase family. This sequence in the C-terminal section; belongs to the DAO family. The cofactor is FAD.

It is found in the cytoplasm. The enzyme catalyses 5-aminomethyl-2-thiouridine(34) in tRNA + S-adenosyl-L-methionine = 5-methylaminomethyl-2-thiouridine(34) in tRNA + S-adenosyl-L-homocysteine + H(+). Functionally, catalyzes the last two steps in the biosynthesis of 5-methylaminomethyl-2-thiouridine (mnm(5)s(2)U) at the wobble position (U34) in tRNA. Catalyzes the FAD-dependent demodification of cmnm(5)s(2)U34 to nm(5)s(2)U34, followed by the transfer of a methyl group from S-adenosyl-L-methionine to nm(5)s(2)U34, to form mnm(5)s(2)U34. This is tRNA 5-methylaminomethyl-2-thiouridine biosynthesis bifunctional protein MnmC from Salmonella typhi.